A 210-amino-acid polypeptide reads, in one-letter code: Probable GTP-binding protein EngB (210 aa).

Residues 27 to 201 (MGIEVAFAGR…HQKLDIWFSQ (175 aa)) form the EngB-type G domain. GTP-binding positions include 35-42 (GRSNAGKS), 62-66 (GRTQL), 80-83 (DLPG), 147-150 (TKAD), and 180-182 (FSV). Residues serine 42 and threonine 64 each coordinate Mg(2+).

This sequence belongs to the TRAFAC class TrmE-Era-EngA-EngB-Septin-like GTPase superfamily. EngB GTPase family. It depends on Mg(2+) as a cofactor.

Its function is as follows. Necessary for normal cell division and for the maintenance of normal septation. The polypeptide is Probable GTP-binding protein EngB (Photorhabdus laumondii subsp. laumondii (strain DSM 15139 / CIP 105565 / TT01) (Photorhabdus luminescens subsp. laumondii)).